The sequence spans 439 residues: Perilipin-3 (439 aa).

Residues 1–19 (MFASETEASASSTQVTTEE) show a composition bias toward low complexity. Residues 1–26 (MFASETEASASSTQVTTEEPVQQPSV) are disordered. The residue at position 66 (Lys66) is an N6-acetyllysine. Ser92 carries the phosphoserine modification. Residue Lys123 forms a Glycyl lysine isopeptide (Lys-Gly) (interchain with G-Cter in SUMO1) linkage. Ser131 carries the phosphoserine modification. At Thr175 the chain carries Phosphothreonine. Phosphoserine is present on residues Ser180 and Ser184. Position 221 is a phosphothreonine (Thr221). Phosphoserine is present on residues Ser222 and Ser246. Coiled coils occupy residues 254-282 (RAYEHSLGKLQHTRQRAQEALLQLSQALS) and 358-381 (AHVKEQALQARRQVEDLQATFSGM). Tyr256 is subject to Phosphotyrosine.

It belongs to the perilipin family. As to quaternary structure, homooligomer. Interacts with M6PR (via the cytoplasmic domain). Interacts with IGF2R (via the cytoplasmic domain). Phosphorylation at Tyr-256 by isoform 1 of CHKA (CHKalpha2) promotes dissociation from lipid droplets: dissociation is followed by recruitment of autophagosome machinery to lipid droplets and subsequent lipid droplet lipolysis.

It localises to the lipid droplet. The protein resides in the endosome membrane. The protein localises to the cytoplasm. Structural component of lipid droplets, which is required for the formation and maintenance of lipid storage droplets. Required for the transport of mannose 6-phosphate receptors (MPR) from endosomes to the trans-Golgi network. The polypeptide is Perilipin-3 (PLIN3) (Sus scrofa (Pig)).